Consider the following 353-residue polypeptide: Protein pelota homolog (353 aa).

This sequence belongs to the eukaryotic release factor 1 family. Pelota subfamily. As to quaternary structure, monomer. Requires a divalent metal cation as cofactor.

It localises to the cytoplasm. Functionally, may function in recognizing stalled ribosomes, interact with stem-loop structures in stalled mRNA molecules, and effect endonucleolytic cleavage of the mRNA. May play a role in the release non-functional ribosomes and degradation of damaged mRNAs. Has endoribonuclease activity. In Methanobrevibacter smithii (strain ATCC 35061 / DSM 861 / OCM 144 / PS), this protein is Protein pelota homolog.